Reading from the N-terminus, the 214-residue chain is tRNA (guanine-N(7)-)-methyltransferase (214 aa).

Positions 43, 68, 95, and 117 each coordinate S-adenosyl-L-methionine. Residue Asp-117 is part of the active site. Residues Lys-121, Asp-153, and 190–193 (TEYE) each bind substrate.

It belongs to the class I-like SAM-binding methyltransferase superfamily. TrmB family.

The enzyme catalyses guanosine(46) in tRNA + S-adenosyl-L-methionine = N(7)-methylguanosine(46) in tRNA + S-adenosyl-L-homocysteine. Its pathway is tRNA modification; N(7)-methylguanine-tRNA biosynthesis. Its function is as follows. Catalyzes the formation of N(7)-methylguanine at position 46 (m7G46) in tRNA. In Staphylococcus aureus (strain MSSA476), this protein is tRNA (guanine-N(7)-)-methyltransferase.